The following is a 249-amino-acid chain: Probable transcriptional regulatory protein CYB_1350 (249 aa).

Belongs to the TACO1 family.

The protein resides in the cytoplasm. In Synechococcus sp. (strain JA-2-3B'a(2-13)) (Cyanobacteria bacterium Yellowstone B-Prime), this protein is Probable transcriptional regulatory protein CYB_1350.